Reading from the N-terminus, the 695-residue chain is MSAPARPAPAAPIRVTAGTTAGQAVRDAGLPSRGAPDAVVVVRDADGRLRDLSWVPDTDVEVTPVAADTEDGRSVIRHSAAHVLAQAVQEMFPDAKLGIGPPITDGFYYDFDVAEPFTPEHLQALEKKMRKIVKDGQIFERRVFGSKDEARAELASEPYKLELIDDKSGADDPEVMEVGGDELTAYDNLNPRTRERVWGDLCRGPHIPTTRYIPAFTLTRSSAAYWRGDQNNASLQRIYGTAWESQEALDRHLELIEEAQRRDHRKLGVELDLFSFPDELGSGLPVFHPKGGVVRRELEEYSRRKHIEAGYEFVNTPHITKEQLYITSGHLEWYADGMFPPMQIDAEYNEDGTVRKPGQDYYLKPMNCPMHHLIYRSRGRSYRELPLRLFEFGSVYRYEKSGVIHGLTRVRGMTQDDAHIYCTREEMRDELARLLQFVLDLLADYGLDDFYLELSTKDPDKFVGSDDLWEEATETLREVAESSGLALVPDPGGAAFYGPKISVQVRDALGRNWQMSTIQLDFNMPDRFELEYTSSDGTRRRPVLIHRALFGSIERFFGVLTEHYAGAFPVWLAPVQVVGIPVADAHAGYLDGVAAELRRRGIRVEVDASDDRMAKKIVNHTNQKVPFMLLAGDKDVEAGAVSFRFGDRTQINGVPRDQAVEAIVDWVNRRENATPTAELVVLPSGDAQSPVAGEG.

The region spanning 1–66 (MSAPARPAPA…DTDVEVTPVA (66 aa)) is the TGS domain. The interval 263-569 (DHRKLGVELD…LTEHYAGAFP (307 aa)) is catalytic. C368, H419, and H546 together coordinate Zn(2+).

It belongs to the class-II aminoacyl-tRNA synthetase family. In terms of assembly, homodimer. The cofactor is Zn(2+).

Its subcellular location is the cytoplasm. The enzyme catalyses tRNA(Thr) + L-threonine + ATP = L-threonyl-tRNA(Thr) + AMP + diphosphate + H(+). Its function is as follows. Catalyzes the attachment of threonine to tRNA(Thr) in a two-step reaction: L-threonine is first activated by ATP to form Thr-AMP and then transferred to the acceptor end of tRNA(Thr). Also edits incorrectly charged L-seryl-tRNA(Thr). The protein is Threonine--tRNA ligase of Mycolicibacterium gilvum (strain PYR-GCK) (Mycobacterium gilvum (strain PYR-GCK)).